The chain runs to 299 residues: Acetylglutamate kinase (299 aa).

Substrate is bound by residues 68–69 (GG), Arg90, and Asn195.

The protein belongs to the acetylglutamate kinase family. ArgB subfamily.

The protein localises to the cytoplasm. The catalysed reaction is N-acetyl-L-glutamate + ATP = N-acetyl-L-glutamyl 5-phosphate + ADP. Its pathway is amino-acid biosynthesis; L-arginine biosynthesis; N(2)-acetyl-L-ornithine from L-glutamate: step 2/4. In terms of biological role, catalyzes the ATP-dependent phosphorylation of N-acetyl-L-glutamate. The polypeptide is Acetylglutamate kinase (Erythrobacter litoralis (strain HTCC2594)).